Reading from the N-terminus, the 165-residue chain is MADEEKLPPGWEKRMSRSSGRVYYFNHITNASQWERPSGGSTVGGSSKNGQGEPAKVRCSHLLVKHSQSRRPSSWRQEKITRSKEEALELINGYIQKIKSGEEDFESLASQFSDCSSAKARGDLGPFSRGQMQKPFEDASFALRTGEMSGPVFTDSGIHIILRTE.

The region spanning 5–39 (EKLPPGWEKRMSRSSGRVYYFNHITNASQWERPSG) is the WW domain. Positions 33 to 56 (QWERPSGGSTVGGSSKNGQGEPAK) are disordered. Lysine 48 is subject to N6-acetyllysine. The PpiC domain occupies 54–165 (PAKVRCSHLL…SGIHIILRTE (112 aa)). Serine 73 and serine 110 each carry phosphoserine.

Interacts with STIL. Interacts with KIF20B. Interacts with NEK6. Interacts (via WW domain) with PRKX. Interacts with BTK. Interacts (via PpiC domain) with DAPK1. Interacts with the phosphorylated form of RAF1. Interacts (via WW domain) with ATCAY; upon NGF stimulation. Interacts with PML. Interacts with BCL6. Interacts with FBXW7, disrupting FBXW7 dimerization and promoting FBXW7 autoubiquitination and degradation. Directly interacts with RBBP8/CtIP; this interaction depends upon RBBP8 phosphorylation. Interacts (via WW domain) with IRAK3/IRAK-M (when phosphorylated at 'Ser-110') in response to IL33-mediated (but not TLR4 ligand LPS) dendritic cell stimulation. Interacts with PGK1 (when phosphorylated at 'Ser-203'); the interaction is direct, occurs under hypoxic conditions, and targets PGK1 to the mitochondrion by promoting interactions with the TOM complex. Phosphorylation at Ser-73 by DAPK1 results in inhibition of its catalytic activity, nuclear localization, and its ability to induce centrosome amplification, chromosome instability and cell transformation. Ser-73 is dephosphorylated upon IL33-stimulation of dendritic cells. As to expression, expressed in dendritic cells (at protein level).

The protein resides in the nucleus. It localises to the nucleus speckle. The protein localises to the cytoplasm. It carries out the reaction [protein]-peptidylproline (omega=180) = [protein]-peptidylproline (omega=0). Functionally, peptidyl-prolyl cis/trans isomerase (PPIase) that binds to and isomerizes specific phosphorylated Ser/Thr-Pro (pSer/Thr-Pro) motifs. By inducing conformational changes in a subset of phosphorylated proteins, acts as a molecular switch in multiple cellular processes. Displays a preference for an acidic residue N-terminal to the isomerized proline bond. Regulates mitosis presumably by interacting with NIMA and attenuating its mitosis-promoting activity. Down-regulates kinase activity of BTK. Can transactivate multiple oncogenes and induce centrosome amplification, chromosome instability and cell transformation. Required for the efficient dephosphorylation and recycling of RAF1 after mitogen activation. Binds and targets PML and BCL6 for degradation in a phosphorylation-dependent manner. Acts as a regulator of JNK cascade by binding to phosphorylated FBXW7, disrupting FBXW7 dimerization and promoting FBXW7 autoubiquitination and degradation: degradation of FBXW7 leads to subsequent stabilization of JUN. May facilitate the ubiquitination and proteasomal degradation of RBBP8/CtIP through CUL3/KLHL15 E3 ubiquitin-protein ligase complex, hence favors DNA double-strand repair through error-prone non-homologous end joining (NHEJ) over error-free, RBBP8-mediated homologous recombination (HR). Upon IL33-induced lung inflammation, catalyzes cis-trans isomerization of phosphorylated IRAK3/IRAK-M, inducing IRAK3 stabilization, nuclear translocation and expression of pro-inflammatory genes in dendritic cells. Catalyzes cis-trans isomerization of phosphorylated phosphoglycerate kinase PGK1 under hypoxic conditions to promote its binding to the TOM complex and targeting to the mitochondrion. The sequence is that of Peptidyl-prolyl cis-trans isomerase NIMA-interacting 1 (Pin1) from Mus musculus (Mouse).